A 688-amino-acid chain; its full sequence is Pentatricopeptide repeat-containing protein At3g18020 (688 aa).

17 PPR repeats span residues 53 to 88 (DRAYWRRRIHSICAVRRNPDEALRILDGLCLRGYRP), 89 to 123 (DSLNLSSVIHSLCDAGRFDEAHRRFLLFLASGFIP), 124 to 158 (DERTCNVIIARLLYSRSPVSTLGVIHRLIGFKKEF), 161 to 195 (SLTNYNRLMNQLCTIYRVIDAHKLVFDMRNRGHLP), 196 to 230 (DVVTFTTLIGGYCEIRELEVAHKVFDEMRVCGIRP), 231 to 261 (NSLTLSVLIGGFLKMRDVETGRKLMKELWEY), 271 to 305 (KAAAFANLVDSMCREGYFNDIFEIAENMSLCESVN), 306 to 340 (VEFAYGHMIDSLCRYRRNHGAARIVYIMKSKGLKP), 341 to 375 (RRTSYNAIIHGLCKDGGCMRAYQLLEEGSEFEFFP), 376 to 406 (SEYTYKLLMESLCKELDTGKARNVLELMLRK), 411 to 445 (RTRIYNIYLRGLCVMDNPTEILNVLVSMLQGDCRP), 446 to 480 (DEYTLNTVINGLCKMGRVDDAMKVLDDMMTGKFCA), 482 to 517 (DAVTLNTVMCGLLAQGRAEEALDVLNRVMPENKIKP), 518 to 552 (GVVAYNAVIRGLFKLHKGDEAMSVFGQLEKASVTA), 553 to 583 (DSTTYAIIIDGLCVTNKVDMAKKFWDDVIWP), 588 to 622 (DAFVYAAFLKGLCQSGYLSDACHFLYDLADSGAIP), and 623 to 657 (NVVCYNTVIAECSRSGLKREAYQILEEMRKNGQAP).

Belongs to the PPR family. P subfamily.

This Arabidopsis thaliana (Mouse-ear cress) protein is Pentatricopeptide repeat-containing protein At3g18020.